A 527-amino-acid polypeptide reads, in one-letter code: Amine oxidase [flavin-containing] A (527 aa).

An N-acetylmethionine modification is found at methionine 1. The Cytoplasmic segment spans residues 1–497 (MESLQKTSDA…PSFWERNLPS (497 aa)). Serine 383 bears the Phosphoserine mark. Position 406 is an S-8alpha-FAD cysteine (cysteine 406). Residues 498–518 (VSGLLKIVGFSTSITALWFVM) traverse the membrane as a helical; Anchor for type IV membrane protein segment. Residues 519-527 (YRFRLLSRS) lie on the Mitochondrial intermembrane side of the membrane. The tract at residues 520–522 (RFR) is interaction with membrane phospholipid headgroups.

It belongs to the flavin monoamine oxidase family. Monomer, homo- or heterodimer (containing two subunits of similar size). Each subunit contains a covalently bound flavin. Enzymatically active as monomer. It depends on FAD as a cofactor.

The protein resides in the mitochondrion outer membrane. The catalysed reaction is a secondary aliphatic amine + O2 + H2O = a primary amine + an aldehyde + H2O2. It catalyses the reaction a primary methyl amine + O2 + H2O = an aldehyde + H2O2 + NH4(+). It carries out the reaction (R)-adrenaline + O2 + H2O = (R)-3,4-dihydroxymandelaldehyde + methylamine + H2O2. The enzyme catalyses dopamine + O2 + H2O = 3,4-dihydroxyphenylacetaldehyde + H2O2 + NH4(+). The catalysed reaction is tyramine + O2 + H2O = (4-hydroxyphenyl)acetaldehyde + H2O2 + NH4(+). It catalyses the reaction (R)-noradrenaline + O2 + H2O = (R)-3,4-dihydroxymandelaldehyde + H2O2 + NH4(+). It carries out the reaction serotonin + O2 + H2O = (5-hydroxyindol-3-yl)acetaldehyde + H2O2 + NH4(+). The enzyme catalyses kynuramine + O2 + H2O = 3-(2-aminophenyl)-3-oxopropanal + H2O2 + NH4(+). The catalysed reaction is tryptamine + O2 + H2O = indole-3-acetaldehyde + H2O2 + NH4(+). It catalyses the reaction 2-phenylethylamine + O2 + H2O = 2-phenylacetaldehyde + H2O2 + NH4(+). Catalyzes the oxidative deamination of primary and some secondary amine such as neurotransmitters, with concomitant reduction of oxygen to hydrogen peroxide and has important functions in the metabolism of neuroactive and vasoactive amines in the central nervous system and peripheral tissues. Preferentially oxidizes serotonin. Also catalyzes the oxidative deamination of kynuramine to 3-(2-aminophenyl)-3-oxopropanal that can spontaneously condense to 4-hydroxyquinoline. In Bos taurus (Bovine), this protein is Amine oxidase [flavin-containing] A.